The sequence spans 209 residues: MPKHYCDYCDVFLTHDSASVRKAHNSGRNHLANVRDYYASLGHDKAQSIIDQITSAFESGQGPPPGGFGFGPQHLQAPPQGGFAPPMGGFPPGGFPPGPRPPFPPGPGFPPMMPPGAPPFPPNAMPPPGAFGGPPPFPPNGPPGAPPFPPNASQQGGPPGAPSFPPPPGGFNGPPPPSGQNSQGPPPPTNPGPGGMHPDRARMMGPGGR.

The Matrin-type zinc finger occupies 4-36 (HYCDYCDVFLTHDSASVRKAHNSGRNHLANVRD). Over residues 72 to 87 (PQHLQAPPQGGFAPPM) the composition is skewed to low complexity. The interval 72–209 (PQHLQAPPQG…RARMMGPGGR (138 aa)) is disordered. 2 stretches are compositionally biased toward pro residues: residues 93–150 (GGFP…PFPP) and 159–191 (PGAPSFPPPPGGFNGPPPPSGQNSQGPPPPTNP).

This sequence belongs to the U1 small nuclear ribonucleoprotein C family. U1 snRNP is composed of the 7 core Sm proteins B/B', D1, D2, D3, E, F and G that assemble in a heptameric protein ring on the Sm site of the small nuclear RNA to form the core snRNP, and at least 3 U1 snRNP-specific proteins U1-70K, U1-A and U1-C. U1-C interacts with U1 snRNA and the 5' splice-site region of the pre-mRNA.

It localises to the nucleus. Component of the spliceosomal U1 snRNP, which is essential for recognition of the pre-mRNA 5' splice-site and the subsequent assembly of the spliceosome. U1-C is directly involved in initial 5' splice-site recognition for both constitutive and regulated alternative splicing. The interaction with the 5' splice-site seems to precede base-pairing between the pre-mRNA and the U1 snRNA. Stimulates commitment or early (E) complex formation by stabilizing the base pairing of the 5' end of the U1 snRNA and the 5' splice-site region. This Coprinopsis cinerea (strain Okayama-7 / 130 / ATCC MYA-4618 / FGSC 9003) (Inky cap fungus) protein is U1 small nuclear ribonucleoprotein C.